We begin with the raw amino-acid sequence, 790 residues long: Centrosomal protein of 78 kDa (790 aa).

Disordered stretches follow at residues 325 to 345 (YQWVTSPSSKEPSKTAKQRKK), 362 to 385 (GLATKKPSSNGRKQGLGKDCYAPN), 428 to 462 (VTVTVESPSSSETDETEDSSESVQEAPQKTSIKEE), 654 to 732 (AKTG…LNEP), and 756 to 790 (KTIKSKPNLLEHSESDTLGSDFELQERVHSSAHLT). Phosphoserine is present on residues Ser330 and Ser332. A compositionally biased stretch (low complexity) spans 428–438 (VTVTVESPSSS). Residues 455–510 (QKTSIKEETLQEKLEECLRQLKEERVIRLKADKRVSELEHENAQLRNINFSLSEAL) adopt a coiled-coil conformation. 2 stretches are compositionally biased toward basic and acidic residues: residues 693-708 (PSRRPSAERHPRKDLL) and 721-732 (GPGDRRSLLNEP).

This sequence belongs to the CEP78 family. Interacts with PLK4. Interacts with FAM161A. Interacts with IFT20; regulating IFT20 stability and localization. Interacts with TTC21A; regulating TTC21A stability and localization. Interacts with USP16; promoting USP16-dependent deubiquitination of tektins. Interacts with DCAF1/VPRBP; promoting localization of the EDVP complex to centrosomes. Interacts with CEP350; promoting CEP78 localization to centrosome and centriole. As to expression, expressed by photoreceptor cells in the retina.

It localises to the cytoplasm. The protein localises to the cytoskeleton. Its subcellular location is the microtubule organizing center. The protein resides in the centrosome. It is found in the centriole. It localises to the cilium basal body. Its function is as follows. Centriole wall protein that localizes to mature centrioles and regulates centriole and cilia biogenesis. Involved in centrosome duplication: required for efficient PLK4 centrosomal localization and PLK4-induced overduplication of centrioles. Involved in cilium biogenesis and controls cilium length. Acts as a regulator of protein stability by preventing ubiquitination of centrosomal proteins, such as CCP110 and tektins. Associates with the EDVP complex, preventing ubiquitination and degradation of CCP110. Promotes deubiquitination of tektin proteins (TEKT1, TEKT2, TEK3, TEKT4 and TEKT5) via its interaction with USP16. This Mus musculus (Mouse) protein is Centrosomal protein of 78 kDa.